A 421-amino-acid polypeptide reads, in one-letter code: D-aspartate ligase (421 aa).

The 203-residue stretch at 130 to 332 (YEVCEEYDLP…LARFVTEDRV (203 aa)) folds into the ATP-grasp domain. Position 161-224 (161-224 (PFEFPVALKP…QDFIPGDDSN (64 aa))) interacts with ATP. The Mg(2+) site is built by Asp-290, Glu-304, and Asn-306.

It depends on Mg(2+) as a cofactor.

It carries out the reaction [beta-GlcNAc-(1-&gt;4)-Mur2Ac(oyl-L-Ala-gamma-D-Glu-L-Lys-D-Ala-D-Ala)](n) + n D-aspartate + n ATP = [beta-GlcNAc-(1-&gt;4)-Mur2Ac(oyl-L-Ala-gamma-D-Glu-6-N-(beta-D-Asp)-L-Lys-D-Ala-D-Ala)]n + n ADP + n phosphate + n H(+). Its pathway is cell wall biogenesis; peptidoglycan biosynthesis. Functionally, catalyzes the addition of D-aspartate onto the lysine residue in the peptidoglycan precursor UDP-MurNAc-pentapeptide. The ligation occurs between the beta-carboxylate of D-Asp and the epsilon-amino group of L-Lys. Is highly specific for D-aspartate, as L-aspartate, D-glutamate, D-alanine, D-iso-asparagine and D-malate are not substrates. The protein is D-aspartate ligase of Enterococcus faecium (strain Aus0004).